Consider the following 347-residue polypeptide: Protein RecA (347 aa).

ATP is bound at residue 67–74 (GPESSGKT).

It belongs to the RecA family. The protein migrates as a 40 kDa protein in strains 69A and NCTC 11637. When overexpressed in E.coli a 38 kDa protein is made which is unable to complement the E.coli deletion mutant. It has been suggested this size difference is due to a post-translational modification.

It is found in the cytoplasm. Functionally, can catalyze the hydrolysis of ATP in the presence of single-stranded DNA, the ATP-dependent uptake of single-stranded DNA by duplex DNA, and the ATP-dependent hybridization of homologous single-stranded DNAs. It interacts with LexA causing its activation and leading to its autocatalytic cleavage. Its function is as follows. Deletion of this gene leads to the inability of the bacteria to perform homologous recombination, and markedly increases UV sensitivity. The protein is Protein RecA of Helicobacter pylori (strain ATCC 700392 / 26695) (Campylobacter pylori).